A 35-amino-acid chain; its full sequence is Potassium channel toxin (35 aa).

3 disulfides stabilise this stretch: Cys6–Cys25, Cys11–Cys30, and Cys15–Cys32.

The protein belongs to the short scorpion toxin superfamily. Potassium channel inhibitor family. Alpha-KTx 21 subfamily. As to expression, expressed by the venom gland.

The protein localises to the secreted. Its function is as follows. Toxin that blocks voltage-gated potassium channels (Kv). The sequence is that of Potassium channel toxin from Tityus metuendus (Scorpion).